The chain runs to 1030 residues: Putative pentatricopeptide repeat-containing protein At5g06400, mitochondrial (1030 aa).

The transit peptide at M1–R77 directs the protein to the mitochondrion. 19 PPR repeats span residues R188–K222, D223–L257, D258–F292, G293–I323, E328–L362, D363–R393, D397–P431, R432–P466, D467–P501, T502–I536, N677–I711, T712–P746, S747–P783, D784–I814, V818–L852, D853–P887, G888–P922, S923–P957, and D958–P992.

This sequence belongs to the PPR family. P subfamily.

Its subcellular location is the mitochondrion. The chain is Putative pentatricopeptide repeat-containing protein At5g06400, mitochondrial from Arabidopsis thaliana (Mouse-ear cress).